The primary structure comprises 122 residues: Large ribosomal subunit protein bL17 (122 aa).

Belongs to the bacterial ribosomal protein bL17 family. Part of the 50S ribosomal subunit. Contacts protein L32.

This chain is Large ribosomal subunit protein bL17, found in Neisseria meningitidis serogroup B (strain ATCC BAA-335 / MC58).